Here is a 410-residue protein sequence, read N- to C-terminus: Multifunctional CCA protein (410 aa).

The ATP site is built by Gly-8 and Arg-11. Residues Gly-8 and Arg-11 each coordinate CTP. Asp-21 and Asp-23 together coordinate Mg(2+). ATP-binding residues include Arg-91, Arg-138, and Arg-141. CTP is bound by residues Arg-91, Arg-138, and Arg-141. Positions 229–347 (TGIHQEMVSD…AQLALVCEAD (119 aa)) constitute an HD domain.

This sequence belongs to the tRNA nucleotidyltransferase/poly(A) polymerase family. Bacterial CCA-adding enzyme type 1 subfamily. Monomer. Can also form homodimers and oligomers. It depends on Mg(2+) as a cofactor. Requires Ni(2+) as cofactor.

It carries out the reaction a tRNA precursor + 2 CTP + ATP = a tRNA with a 3' CCA end + 3 diphosphate. The catalysed reaction is a tRNA with a 3' CCA end + 2 CTP + ATP = a tRNA with a 3' CCACCA end + 3 diphosphate. Functionally, catalyzes the addition and repair of the essential 3'-terminal CCA sequence in tRNAs without using a nucleic acid template. Adds these three nucleotides in the order of C, C, and A to the tRNA nucleotide-73, using CTP and ATP as substrates and producing inorganic pyrophosphate. tRNA 3'-terminal CCA addition is required both for tRNA processing and repair. Also involved in tRNA surveillance by mediating tandem CCA addition to generate a CCACCA at the 3' terminus of unstable tRNAs. While stable tRNAs receive only 3'-terminal CCA, unstable tRNAs are marked with CCACCA and rapidly degraded. The protein is Multifunctional CCA protein of Xanthomonas axonopodis pv. citri (strain 306).